A 310-amino-acid polypeptide reads, in one-letter code: Glutaminase 1 (310 aa).

7 residues coordinate substrate: Ser66, Asn117, Glu161, Asn168, Tyr192, Tyr244, and Val262. Lys294 is subject to N6-acetyllysine.

This sequence belongs to the glutaminase family. As to quaternary structure, homotetramer.

It carries out the reaction L-glutamine + H2O = L-glutamate + NH4(+). The protein is Glutaminase 1 of Escherichia coli O157:H7.